The sequence spans 441 residues: Serine hydroxymethyltransferase (441 aa).

Residue 124 to 126 coordinates (6S)-5,6,7,8-tetrahydrofolate; sequence GHI. Position 239 is an N6-(pyridoxal phosphate)lysine (lysine 239).

It belongs to the SHMT family. In terms of assembly, homodimer. Requires pyridoxal 5'-phosphate as cofactor.

Its subcellular location is the cytoplasm. Its pathway is amino-acid biosynthesis; glycine biosynthesis; glycine from L-serine: step 1/1. Functionally, catalyzes the reversible interconversion of serine and glycine with a modified folate serving as the one-carbon carrier. Also exhibits a pteridine-independent aldolase activity toward beta-hydroxyamino acids, producing glycine and aldehydes, via a retro-aldol mechanism. In Cenarchaeum symbiosum (strain A), this protein is Serine hydroxymethyltransferase.